Consider the following 220-residue polypeptide: Glutathione S-transferase U23 (220 aa).

Positions 3–82 (EEIILLDYWA…YIDELWPDTN (80 aa)) constitute a GST N-terminal domain. Glutathione is bound by residues 13 to 14 (SM), 39 to 40 (NK), 53 to 54 (KI), and 66 to 67 (ES). One can recognise a GST C-terminal domain in the interval 88–208 (DPYQRAQARF…LPDSDKVLKS (121 aa)).

This sequence belongs to the GST superfamily. Tau family.

It localises to the cytoplasm. Its subcellular location is the cytosol. The enzyme catalyses RX + glutathione = an S-substituted glutathione + a halide anion + H(+). Its function is as follows. May be involved in the conjugation of reduced glutathione to a wide number of exogenous and endogenous hydrophobic electrophiles and have a detoxification role against certain herbicides. This chain is Glutathione S-transferase U23 (GSTU23), found in Arabidopsis thaliana (Mouse-ear cress).